The chain runs to 410 residues: MSAPSRITAALRSDAVGGSLLIGAAVIALIWANSPLSHSYEALRSFTFGPSALHLNLSVETWAADGLLAVFFFIVGNELKQELVHGELRDPRRAALPIAAALGGVAVPALVFLAFTLGSGGEAAGGWGIPMATGIAFAVAVLAVVGRHLPTPLRTFLLTLATVDDMSAVLVIAVACTSGINFTALALAAVGLAVFGYLQNGSGRAVARVRAMVPAWLLFVPLAAVVWALMHACGVHATIAGVVMGLLMRTRPQGAERVSPSHRAEEVLRPFSAGIALPLFALMSAGVSLAGAGGFVTSAITWNVLAGLLVGKVVGIFGGTWPTSRLTSAHLNPLLGWADIAGIAVLGGIGFTVSLPIAELSSTSQAHLTDAKGAILLASTTAALLAALLLGRRSRHHQRLARQAAQQATT.

The next 11 helical transmembrane spans lie at 16 to 36 (VGGSLLIGAAVIALIWANSPL), 55 to 75 (LNLSVETWAADGLLAVFFFIV), 95 to 115 (ALPIAAALGGVAVPALVFLAF), 125 to 145 (GGWGIPMATGIAFAVAVLAVV), 156 to 176 (FLLTLATVDDMSAVLVIAVAC), 178 to 198 (SGINFTALALAAVGLAVFGYL), 215 to 235 (AWLLFVPLAAVVWALMHACGV), 275 to 295 (IALPLFALMSAGVSLAGAGGF), 299 to 319 (AITWNVLAGLLVGKVVGIFGG), 340 to 360 (IAGIAVLGGIGFTVSLPIAEL), and 371 to 391 (AKGAILLASTTAALLAALLLG).

The protein belongs to the NhaA Na(+)/H(+) (TC 2.A.33) antiporter family.

Its subcellular location is the cell membrane. The enzyme catalyses Na(+)(in) + 2 H(+)(out) = Na(+)(out) + 2 H(+)(in). Its function is as follows. Na(+)/H(+) antiporter that extrudes sodium in exchange for external protons. In Streptomyces coelicolor (strain ATCC BAA-471 / A3(2) / M145), this protein is Na(+)/H(+) antiporter NhaA 1/4.